A 126-amino-acid chain; its full sequence is Alpha-lactalbumin (126 aa).

The 126-residue stretch at Arg-1 to Cys-126 folds into the C-type lysozyme domain. Cystine bridges form between Cys-6–Cys-126, Cys-30–Cys-117, Cys-63–Cys-82, and Cys-78–Cys-96. An N-linked (GlcNAc...) asparagine glycan is attached at Asn-47. Ca(2+) is bound by residues Lys-84, Asp-87, Asp-89, Asp-92, and Asp-93.

This sequence belongs to the glycosyl hydrolase 22 family. In terms of assembly, lactose synthase (LS) is a heterodimer of a catalytic component, beta1,4-galactosyltransferase (beta4Gal-T1) and a regulatory component, alpha-lactalbumin (LA). Mammary gland specific. Secreted in milk.

It localises to the secreted. In terms of biological role, regulatory subunit of lactose synthase, changes the substrate specificity of galactosyltransferase in the mammary gland making glucose a good acceptor substrate for this enzyme. This enables LS to synthesize lactose, the major carbohydrate component of milk. In other tissues, galactosyltransferase transfers galactose onto the N-acetylglucosamine of the oligosaccharide chains in glycoproteins. This is Alpha-lactalbumin (LALBA) from Ornithorhynchus anatinus (Duckbill platypus).